Reading from the N-terminus, the 271-residue chain is MILVDISNSVTKIGLFKEGELRLLEKIPTAQISFEQTERIAQMYPLEDLILCSVVPQKNLFFEKPFLGRLYQIDPTVPLGIPIHYPNPREIGADRLANAVALSLLYGYPAVAIDFGTATTFDIVDQKGAFCGGIIAPGLSMMTSYLHEKTALLPLVEIKEPSKVIAQSTEEALRVGAVHGYRGMVQYLIEKIKEELGLLQKFIVVATGGGSRLVCSQLKSVDVIDEMLTLKGIRLIGEILIKRKRKDLPFPEGYPPMKGESFPFSLFTHNQ.

Residue 5-12 participates in ATP binding; sequence DISNSVTK. Substrate is bound by residues Y85 and 92–95; that span reads GADR. Catalysis depends on D94, which acts as the Proton acceptor. D114 provides a ligand contact to K(+). T117 serves as a coordination point for ATP. T169 provides a ligand contact to substrate.

Belongs to the type III pantothenate kinase family. Homodimer. Requires NH4(+) as cofactor. K(+) is required as a cofactor.

It is found in the cytoplasm. It catalyses the reaction (R)-pantothenate + ATP = (R)-4'-phosphopantothenate + ADP + H(+). Its pathway is cofactor biosynthesis; coenzyme A biosynthesis; CoA from (R)-pantothenate: step 1/5. Functionally, catalyzes the phosphorylation of pantothenate (Pan), the first step in CoA biosynthesis. In Methylacidiphilum infernorum (isolate V4) (Methylokorus infernorum (strain V4)), this protein is Type III pantothenate kinase.